A 234-amino-acid polypeptide reads, in one-letter code: 7-cyano-7-deazaguanine synthase (234 aa).

Position 7–17 (7–17 (LSGGLDSAVCM)) interacts with ATP. The Zn(2+) site is built by cysteine 197, cysteine 208, cysteine 211, and cysteine 214.

It belongs to the QueC family. Requires Zn(2+) as cofactor.

It carries out the reaction 7-carboxy-7-deazaguanine + NH4(+) + ATP = 7-cyano-7-deazaguanine + ADP + phosphate + H2O + H(+). Its pathway is purine metabolism; 7-cyano-7-deazaguanine biosynthesis. Catalyzes the ATP-dependent conversion of 7-carboxy-7-deazaguanine (CDG) to 7-cyano-7-deazaguanine (preQ(0)). This is 7-cyano-7-deazaguanine synthase from Methanococcus aeolicus (strain ATCC BAA-1280 / DSM 17508 / OCM 812 / Nankai-3).